A 255-amino-acid polypeptide reads, in one-letter code: Hydroxyacylglutathione hydrolase (255 aa).

Residues His52, His54, Asp56, His57, His109, Asp126, and His166 each coordinate Zn(2+).

Belongs to the metallo-beta-lactamase superfamily. Glyoxalase II family. As to quaternary structure, monomer. Zn(2+) serves as cofactor.

It carries out the reaction an S-(2-hydroxyacyl)glutathione + H2O = a 2-hydroxy carboxylate + glutathione + H(+). The protein operates within secondary metabolite metabolism; methylglyoxal degradation; (R)-lactate from methylglyoxal: step 2/2. Thiolesterase that catalyzes the hydrolysis of S-D-lactoyl-glutathione to form glutathione and D-lactic acid. This chain is Hydroxyacylglutathione hydrolase, found in Anaeromyxobacter dehalogenans (strain 2CP-C).